The sequence spans 230 residues: Large ribosomal subunit protein uL1 (230 aa).

The protein belongs to the universal ribosomal protein uL1 family. As to quaternary structure, part of the 50S ribosomal subunit.

In terms of biological role, binds directly to 23S rRNA. The L1 stalk is quite mobile in the ribosome, and is involved in E site tRNA release. Functionally, protein L1 is also a translational repressor protein, it controls the translation of the L11 operon by binding to its mRNA. The chain is Large ribosomal subunit protein uL1 from Thermoanaerobacter sp. (strain X514).